The primary structure comprises 137 residues: Small ribosomal subunit protein bS6 (137 aa).

Belongs to the bacterial ribosomal protein bS6 family.

Binds together with bS18 to 16S ribosomal RNA. In Mycoplasma mycoides subsp. mycoides SC (strain CCUG 32753 / NCTC 10114 / PG1), this protein is Small ribosomal subunit protein bS6.